A 337-amino-acid chain; its full sequence is HTH-type transcriptional regulator DegA (337 aa).

One can recognise an HTH lacI-type domain in the interval 1 to 57; the sequence is MKTTIYDVAKAAGVSITTVSRVINNTGRISDKTRQKVMNVMNEMAYTPNVHAAALTG. Positions 5–24 form a DNA-binding region, H-T-H motif; the sequence is IYDVAKAAGVSITTVSRVIN. Residues 300-319 are disordered; the sequence is AERHRTAGRSNRGKRKAKQK.

In terms of biological role, involved in the control of degradation of B.subtilis amidophosphoribosyltransferase (purF). Probably activates the gene for a degradative protease. This is HTH-type transcriptional regulator DegA (degA) from Bacillus subtilis (strain 168).